Here is a 108-residue protein sequence, read N- to C-terminus: Large ribosomal subunit protein uL11 (108 aa).

The protein belongs to the universal ribosomal protein uL11 family. As to quaternary structure, part of the ribosomal stalk of the 50S ribosomal subunit. Interacts with L10 and the large rRNA to form the base of the stalk. L10 forms an elongated spine to which L12 dimers bind in a sequential fashion forming a multimeric L10(L12)X complex.

Functionally, forms part of the ribosomal stalk which helps the ribosome interact with GTP-bound translation factors. The sequence is that of Large ribosomal subunit protein uL11 (rpl11) from Aeropyrum pernix (strain ATCC 700893 / DSM 11879 / JCM 9820 / NBRC 100138 / K1).